The primary structure comprises 168 residues: Protein GRIM REAPER (168 aa).

Positions 1-30 are cleaved as a signal peptide; it reads MVIKIPNTFIKATSLLSLILYFLIIATSKS. Asparagine 59 is a glycosylation site (N-linked (GlcNAc...) asparagine).

Belongs to the STIG1 family. As to quaternary structure, interacts with PRK5 and to a lower extent with PRK4. Highly expressed in flowers, and at very low levels in leaves.

It is found in the secreted. Its subcellular location is the extracellular space. It localises to the apoplast. Involved in the regulation of cell death induced by extracellular reactive oxygen species. Only the processed peptide, and not the full length GRI can bind in vivo to the extracellular domain of the receptor PRK5. The GRIp-induced cell death is superoxide and salicylic acid dependent. The polypeptide is Protein GRIM REAPER (Arabidopsis thaliana (Mouse-ear cress)).